The chain runs to 235 residues: Vinculin (235 aa).

It belongs to the vinculin/alpha-catenin family. As to quaternary structure, exhibits self-association properties. In terms of processing, phosphorylated on serines, threonines and tyrosines. Acetylated by myristic acid and/or palmitic acid.

The protein resides in the cell membrane. It localises to the cell junction. Its subcellular location is the adherens junction. The protein localises to the focal adhesion. It is found in the cytoplasm. The protein resides in the cytoskeleton. It localises to the sarcolemma. Its subcellular location is the cell projection. The protein localises to the podosome. In terms of biological role, involved in cell adhesion. May be involved in the attachment of the actin-based microfilaments to the plasma membrane. This Xenopus laevis (African clawed frog) protein is Vinculin (vcl).